We begin with the raw amino-acid sequence, 274 residues long: Probable eukaryotic translation initiation factor 3 subunit J (274 aa).

Disordered stretches follow at residues 1–110 and 207–245; these read MDSW…KEAM and KEQQ…NVNS. Acidic residues predominate over residues 38–47; the sequence is DEEDEDEEEN. Residues 52–73 are compositionally biased toward low complexity; that stretch reads QNDSHSVSQKSSSSSQNDQGSN. The segment covering 82 to 110 has biased composition (basic and acidic residues); sequence IQERNFEKAIKASEAAAKEESLESSKEAM. A compositionally biased stretch (low complexity) spans 219–234; the sequence is AAAPAAKPVSTAAPSK.

The protein belongs to the eIF-3 subunit J family. In terms of assembly, component of the eukaryotic translation initiation factor 3 (eIF-3) complex. The eIF-3 complex appears to include tif32/eif3a, SPAC25G10.08/eif3b, tif33/eif3c, SPBC4C3.07/eif3f, tif35/eif3g and sum1/eif3i. This set of common subunits may also associate exclusively with either moe1/eif3d and int6/eif3e, or with SPAC821.05/eif3h and SPAC1751.03/eif3m. The eIF-3 complex may also include SPAC3A12.13c/eif3j. Interacts with sad1.

It is found in the cytoplasm. In terms of biological role, component of the eukaryotic translation initiation factor 3 (eIF-3) complex, which is involved in protein synthesis of a specialized repertoire of mRNAs and, together with other initiation factors, stimulates binding of mRNA and methionyl-tRNAi to the 40S ribosome. The eIF-3 complex specifically targets and initiates translation of a subset of mRNAs involved in cell proliferation. This chain is Probable eukaryotic translation initiation factor 3 subunit J, found in Schizosaccharomyces pombe (strain 972 / ATCC 24843) (Fission yeast).